The chain runs to 581 residues: Spastin (581 aa).

The span at 1–12 (MSSPAGRRKKKG) shows a compositional bias: basic residues. Residues 1 to 39 (MSSPAGRRKKKGSGGASPAPARPPPPAAVPAPAAGPAPA) are disordered. A required for nuclear localization region spans residues 1-48 (MSSPAGRRKKKGSGGASPAPARPPPPAAVPAPAAGPAPAPGSPHKRNL). The Cytoplasmic portion of the chain corresponds to 1–54 (MSSPAGRRKKKGSGGASPAPARPPPPAAVPAPAAGPAPAPGSPHKRNLYYFSYP). The tract at residues 1-78 (MSSPAGRRKK…LGLLFVWLCQ (78 aa)) is required for interaction with ATL1. The required for midbody localization stretch occupies residues 1 to 191 (MSSPAGRRKK…LVMAKDRLQL (191 aa)). The segment at 1–265 (MSSPAGRRKK…GTSKPNRTNK (265 aa)) is required for interaction with RTN1. The Nuclear localization signal signature appears at 4–11 (PAGRRKKK). Residues 20 to 39 (PARPPPPAAVPAPAAGPAPA) show a composition bias toward pro residues. A required for interaction with SSNA1 and microtubules region spans residues 48 to 85 (LYYFSYPLVVGFALLRLLACHLGLLFVWLCQRFSRALM). Positions 55–75 (LVVGFALLRLLACHLGLLFVW) form an intramembrane region, helical. The Nuclear export signal signature appears at 57 to 65 (VGFALLRLL). Over 76-581 (LCQRFSRALM…WNKDFGDTTV (506 aa)) the chain is Cytoplasmic. The segment at 90-111 (SSGTAPAPASPSTPAPGPGGEA) is disordered. Over residues 97-106 (PASPSTPAPG) the composition is skewed to pro residues. The region spanning 118–192 (HKQAFEYISI…VMAKDRLQLL (75 aa)) is the MIT domain. The sufficient for microtubule severing stretch occupies residues 193–581 (ESGAVPKKKD…WNKDFGDTTV (389 aa)). The disordered stretch occupies residues 195–277 (GAVPKKKDPL…TPTTAVRKKK (83 aa)). Positions 206 to 225 (HASNSLPRSKTVMKSGSTGL) are enriched in polar residues. A phosphoserine mark is found at serine 210 and serine 233. A required for interaction with microtubules and microtubule severing region spans residues 235 to 293 (SGLSMVSGARPGSGPAATTHKGTSKPNRTNKPSTPTTAVRKKKDLKNFRNVDSNLANLI). Residues 254 to 271 (HKGTSKPNRTNKPSTPTT) show a composition bias toward polar residues. Threonine 271 bears the Phosphothreonine mark. A Nuclear localization signal motif is present at residues 274-277 (RKKK). Residue 347 to 354 (GPPGNGKT) coordinates ATP. Serine 562 is modified (phosphoserine).

Belongs to the AAA ATPase family. Spastin subfamily. In terms of assembly, homohexamer. Mostly monomeric, but assembles into hexameric structure for short periods of time. Oligomerization seems to be a prerequisite for catalytic activity. Binding to ATP in a cleft between two adjacent subunits stabilizes the homohexameric form. Binds to microtubules at least in part via the alpha-tubulin and beta-tubulin tails. The hexamer adopts a ring conformation through which microtubules pass prior to being severed. Does not interact strongly with tubulin heterodimers. Interacts (via MIT domain) with CHMP1B; the interaction is direct. Interacts with SSNA1. Interacts with ATL1. Interacts with RTN1. Interacts with ZFYVE27. Interacts with REEP1. Interacts (via MIT domain) with IST1.

The protein resides in the membrane. The protein localises to the endoplasmic reticulum. It localises to the midbody. Its subcellular location is the cytoplasm. It is found in the cytoskeleton. The protein resides in the microtubule organizing center. The protein localises to the centrosome. It localises to the perinuclear region. Its subcellular location is the nucleus. It is found in the spindle. The protein resides in the cell projection. The protein localises to the axon. It catalyses the reaction n ATP + n H2O + a microtubule = n ADP + n phosphate + (n+1) alpha/beta tubulin heterodimers.. Allosteric enzyme with a cooperative mechanism; at least two neighbor subunits influence each other strongly in spastin hexamers. Microtubule binding promotes cooperative interactions among spastin subunits. Functionally, ATP-dependent microtubule severing protein that specifically recognizes and cuts microtubules that are polyglutamylated. Preferentially recognizes and acts on microtubules decorated with short polyglutamate tails: severing activity increases as the number of glutamates per tubulin rises from one to eight, but decreases beyond this glutamylation threshold. Severing activity is not dependent on tubulin acetylation or detyrosination. Microtubule severing promotes reorganization of cellular microtubule arrays and the release of microtubules from the centrosome following nucleation. It is critical for the biogenesis and maintenance of complex microtubule arrays in axons, spindles and cilia. SPAST is involved in abscission step of cytokinesis and nuclear envelope reassembly during anaphase in cooperation with the ESCRT-III complex. Recruited at the midbody, probably by IST1, and participates in membrane fission during abscission together with the ESCRT-III complex. Recruited to the nuclear membrane by IST1 and mediates microtubule severing, promoting nuclear envelope sealing and mitotic spindle disassembly during late anaphase. Required for membrane traffic from the endoplasmic reticulum (ER) to the Golgi and endosome recycling. Recruited by IST1 to endosomes and regulates early endosomal tubulation and recycling by mediating microtubule severing. Probably plays a role in axon growth and the formation of axonal branches. This is Spastin from Rattus norvegicus (Rat).